Reading from the N-terminus, the 123-residue chain is Large ribosomal subunit protein uL29 (123 aa).

Residue lysine 19 is modified to N6-acetyllysine. Lysine 25 participates in a covalent cross-link: Glycyl lysine isopeptide (Lys-Gly) (interchain with G-Cter in SUMO2). Phosphoserine is present on serine 29. Lysine 43 bears the N6-acetyllysine mark. The segment at proline 85 to alanine 123 is disordered. Over residues lysine 86–asparagine 96 the composition is skewed to basic residues.

It belongs to the universal ribosomal protein uL29 family. As to quaternary structure, component of the large ribosomal subunit.

It localises to the cytoplasm. Functionally, component of the large ribosomal subunit. The ribosome is a large ribonucleoprotein complex responsible for the synthesis of proteins in the cell. The polypeptide is Large ribosomal subunit protein uL29 (RPL35) (Oryctolagus cuniculus (Rabbit)).